Here is an 83-residue protein sequence, read N- to C-terminus: Small ribosomal subunit protein bS18A (83 aa).

The protein belongs to the bacterial ribosomal protein bS18 family. As to quaternary structure, part of the 30S ribosomal subunit. Forms a tight heterodimer with protein bS6.

In terms of biological role, binds as a heterodimer with protein bS6 to the central domain of the 16S rRNA, where it helps stabilize the platform of the 30S subunit. The chain is Small ribosomal subunit protein bS18A from Mycolicibacterium vanbaalenii (strain DSM 7251 / JCM 13017 / BCRC 16820 / KCTC 9966 / NRRL B-24157 / PYR-1) (Mycobacterium vanbaalenii).